Consider the following 125-residue polypeptide: Secreted RxLR effector protein RXLR-C13 (125 aa).

The signal sequence occupies residues 1-23; it reads MVNSLTFTLVVVCLVRSCDGVAA. A RxLR-dEER motif is present at residues 43–73; it reads RVLQETATANDDVKKLSTSTKVDSKLNQEIK. A glycan (N-linked (GlcNAc...) asparagine) is linked at Asn-85. Residues 106–123 traverse the membrane as a helical segment; sequence FFILATILLFPIAAYMVA.

Belongs to the RxLR effector family.

The protein resides in the secreted. Its subcellular location is the host endoplasmic reticulum membrane. In terms of biological role, secreted effector that does not suppress pattern-triggered immunity (PTI) in plant host. The chain is Secreted RxLR effector protein RXLR-C13 from Plasmopara halstedii (Downy mildew of sunflower).